A 286-amino-acid polypeptide reads, in one-letter code: Large ribosomal subunit protein uL2 (286 aa).

2 disordered regions span residues 22–59 (KELTPGYTPERSLLRPKTKTGGRNNQGKITSRHRGGGH) and 215–286 (LGRR…KLHK). Over residues 230 to 240 (DHPHGGGEGRT) the composition is skewed to basic and acidic residues. Residues 255–286 (KGGRTRQKRKPSNSSIVRRRKSRRYGQLKLHK) show a composition bias toward basic residues.

This sequence belongs to the universal ribosomal protein uL2 family. As to quaternary structure, part of the 50S ribosomal subunit. Forms a bridge to the 30S subunit in the 70S ribosome.

Functionally, one of the primary rRNA binding proteins. Required for association of the 30S and 50S subunits to form the 70S ribosome, for tRNA binding and peptide bond formation. It has been suggested to have peptidyltransferase activity; this is somewhat controversial. Makes several contacts with the 16S rRNA in the 70S ribosome. The polypeptide is Large ribosomal subunit protein uL2 (Rhodopirellula baltica (strain DSM 10527 / NCIMB 13988 / SH1)).